A 254-amino-acid polypeptide reads, in one-letter code: Glutathione S-transferase F14 (254 aa).

In terms of domain architecture, GST N-terminal spans 4 to 85 (SKMKLHCGFI…YLAEQYKDVG (82 aa)). Glutathione contacts are provided by residues 42 to 43 (AK), 56 to 57 (EV), and 69 to 70 (EP). The GST C-terminal domain occupies 92-231 (DPKKRAIMSM…DLMKQRRLPI (140 aa)).

Belongs to the GST superfamily. Phi family.

The protein localises to the cytoplasm. Its subcellular location is the cytosol. It carries out the reaction RX + glutathione = an S-substituted glutathione + a halide anion + H(+). Its function is as follows. May be involved in the conjugation of reduced glutathione to a wide number of exogenous and endogenous hydrophobic electrophiles and have a detoxification role against certain herbicides. In Arabidopsis thaliana (Mouse-ear cress), this protein is Glutathione S-transferase F14.